Here is a 288-residue protein sequence, read N- to C-terminus: Programmed cell death protein 1 (288 aa).

An N-terminal signal peptide occupies residues 1 to 24 (MQIPQAPWPVVWAVLQLGWRPGWF). Residues 25 to 34 (LDSPDRPWNP) are nivolumab binding. Residues 25 to 170 (LDSPDRPWNP…RPAGQFQTLV (146 aa)) lie on the Extracellular side of the membrane. The Ig-like V-type domain occupies 35-145 (PTFSPALLVV…ESLRAELRVT (111 aa)). 4 N-linked (GlcNAc...) asparagine glycosylation sites follow: asparagine 49, asparagine 58, asparagine 74, and asparagine 116. Cysteine 54 and cysteine 123 form a disulfide bridge. Positions 70 to 77 (MSPSNQTD) are interaction with CD274/PDCD1L1. The segment at 74 to 99 (NQTDKLAAFPEDRSQPGQDCRFRVTQ) is pembrolizumab binding. Residues 171–191 (VGVVGGLLGSLVLLVWVLAVI) traverse the membrane as a helical segment. The Cytoplasmic portion of the chain corresponds to 192 to 288 (CSRAARGTIG…PEDGHCSWPL (97 aa)). Positions 221–226 (VDYGEL) match the ITIM motif motif. Phosphotyrosine is present on tyrosine 223. Lysine 233 is covalently cross-linked (Glycyl lysine isopeptide (Lys-Gly) (interchain with G-Cter in ubiquitin)). Threonine 234 carries the post-translational modification Phosphothreonine; by MAPK3. An ITSM motif motif is present at residues 247–251 (EYATI). A Phosphotyrosine modification is found at tyrosine 248. A disordered region spans residues 254–288 (PSGMGTSSPARRGSADGPRSAQPLRPEDGHCSWPL). The span at 278–288 (RPEDGHCSWPL) shows a compositional bias: basic and acidic residues.

As to quaternary structure, monomer. Interacts with CD274/PDCD1L1. Interacts with CD273/PDCD1LG2. Interacts with FBXO38; leading to ubiquitination and degradation of PDCD1 by the proteasome. Ubiquitinated at Lys-233 by the SCF(FBXO38) complex, leading to its proteasomal degradation. Ubiquitinated via 'Lys-48'-linked polyubiquitin chains. Deubiquitinated and thus stabilized by USP5. Post-translationally, tyrosine phosphorylated at Tyr-223 (within ITIM motif) and Tyr-248 (ITSM motif) upon ligand binding. Phosphorylation at Tyr-248 promotes the recruitment of the protein tyrosine phosphatase PTPN11/SHP-2 that mediates dephosphorylation of key TCR proximal signaling molecules, such as ZAP70, PRKCQ/PKCtheta and CD247/CD3zeta. Phosphorylation at Thr-234 promotes the recruitment of the deubiquitinase USP5. In terms of processing, N-glycosylation at Asn-58 contains at least two N-acetylglucosamine units and one fucose. N-glycosylation does not affect binding to nivolumab drug.

It is found in the cell membrane. With respect to regulation, inhibited by pembrolizumab (also named MK-3475 or lambrolizumab), a monoclonal antibody that prevents the interaction with CD274/PDCD1L1. Inhibited by nivolumab (also named ONO-4538, BMS-936558 or Opdivo), a monoclonal antibody that prevents the interaction with CD274/PDCD1L1. The interaction with nivolumab is not dependent on glycosylation and depends on a loop at the N-terminus (N-terminal loop, corresponding to residues 25-34). Targeting the interaction between PDCD1 and CD274/PDCD1L1 with pembrolizumab and nivolumab antibodies has demonstrated great promise as a strategy for controlling and eradicating cancer. Pembrolizumab and nivolumab are used for treatment of patients with advanced melanoma. These antibodies are also effective against other cancers, such as non-small cell lung cancer, renal cell carcinoma, bladder cancer and Hodgkin's lymphoma. In terms of biological role, inhibitory receptor on antigen activated T-cells that plays a critical role in induction and maintenance of immune tolerance to self. Delivers inhibitory signals upon binding to ligands CD274/PDCD1L1 and CD273/PDCD1LG2. Following T-cell receptor (TCR) engagement, PDCD1 associates with CD3-TCR in the immunological synapse and directly inhibits T-cell activation. Suppresses T-cell activation through the recruitment of PTPN11/SHP-2: following ligand-binding, PDCD1 is phosphorylated within the ITSM motif, leading to the recruitment of the protein tyrosine phosphatase PTPN11/SHP-2 that mediates dephosphorylation of key TCR proximal signaling molecules, such as ZAP70, PRKCQ/PKCtheta and CD247/CD3zeta. Functionally, the PDCD1-mediated inhibitory pathway is exploited by tumors to attenuate anti-tumor immunity and escape destruction by the immune system, thereby facilitating tumor survival. The interaction with CD274/PDCD1L1 inhibits cytotoxic T lymphocytes (CTLs) effector function. The blockage of the PDCD1-mediated pathway results in the reversal of the exhausted T-cell phenotype and the normalization of the anti-tumor response, providing a rationale for cancer immunotherapy. The sequence is that of Programmed cell death protein 1 from Homo sapiens (Human).